A 186-amino-acid polypeptide reads, in one-letter code: Centromere protein M (186 aa).

It localises to the nucleus. Its subcellular location is the chromosome. The protein localises to the centromere. Probable component of a centromeric complex involved in assembly of kinetochore proteins, mitotic progression and chromosome segregation. The polypeptide is Centromere protein M (cenpm) (Danio rerio (Zebrafish)).